We begin with the raw amino-acid sequence, 548 residues long: Lysine--tRNA ligase (548 aa).

Positions 43-51 (PSGVPHLGN) match the 'HIGH' region motif. The short motif at 308-312 (PFSSS) is the 'KMSKS' region element.

It belongs to the class-I aminoacyl-tRNA synthetase family.

The protein localises to the cytoplasm. It carries out the reaction tRNA(Lys) + L-lysine + ATP = L-lysyl-tRNA(Lys) + AMP + diphosphate. The chain is Lysine--tRNA ligase from Halobacterium salinarum (strain ATCC 700922 / JCM 11081 / NRC-1) (Halobacterium halobium).